The chain runs to 70 residues: Large ribosomal subunit protein eL38 (70 aa).

This sequence belongs to the eukaryotic ribosomal protein eL38 family.

The sequence is that of Large ribosomal subunit protein eL38 (RpL38) from Lonomia obliqua (Moth).